Reading from the N-terminus, the 337-residue chain is Transcription initiation factor IIB (337 aa).

A TFIIB-type zinc finger spans residues 37–68 (EKAVCPECGSRNLVHDYERAELVCGDCGLVID). Residues Cys-41, Cys-44, Cys-60, and Cys-63 each contribute to the Zn(2+) site. A run of 2 repeats spans residues 154–237 (SELD…SREL) and 248–329 (DYVP…ELAE).

This sequence belongs to the TFIIB family.

Stabilizes TBP binding to an archaeal box-A promoter. Also responsible for recruiting RNA polymerase II to the pre-initiation complex (DNA-TBP-TFIIB). In Methanosarcina mazei (Methanosarcina frisia), this protein is Transcription initiation factor IIB.